We begin with the raw amino-acid sequence, 161 residues long: Allophycocyanin beta chain (161 aa).

Asn-71 carries the N4-methylasparagine modification. Cys-81 contacts (2R,3E)-phycocyanobilin.

Belongs to the phycobiliprotein family. Heterodimer of an alpha and a beta chain. Contains one covalently linked phycocyanobilin chromophore.

It localises to the plastid. Its subcellular location is the cyanelle thylakoid membrane. Light-harvesting photosynthetic bile pigment-protein from the phycobiliprotein complex. Allophycocyanin has a maximum absorption at approximately 650 nanometers. The sequence is that of Allophycocyanin beta chain (apcB) from Cyanophora paradoxa.